A 151-amino-acid chain; its full sequence is FUN14 domain-containing protein 1 (151 aa).

The short motif at Y14 to L17 is the YXXL element. Transmembrane regions (helical) follow at residues Y44–F64, A71–I91, and F130–A150.

This sequence belongs to the FUN14 family.

Its subcellular location is the mitochondrion outer membrane. Its function is as follows. Acts as an activator of hypoxia-induced mitophagy, an important mechanism for mitochondrial quality control. This chain is FUN14 domain-containing protein 1 (fundc1), found in Xenopus tropicalis (Western clawed frog).